A 320-amino-acid chain; its full sequence is Lipoyl synthase (320 aa).

[4Fe-4S] cluster-binding residues include Cys67, Cys72, Cys78, Cys93, Cys97, Cys100, and Ser307. One can recognise a Radical SAM core domain in the interval 79 to 296 (FNHGTATFMI…RDKAEKMGFE (218 aa)).

Belongs to the radical SAM superfamily. Lipoyl synthase family. [4Fe-4S] cluster is required as a cofactor.

The protein localises to the cytoplasm. It carries out the reaction [[Fe-S] cluster scaffold protein carrying a second [4Fe-4S](2+) cluster] + N(6)-octanoyl-L-lysyl-[protein] + 2 oxidized [2Fe-2S]-[ferredoxin] + 2 S-adenosyl-L-methionine + 4 H(+) = [[Fe-S] cluster scaffold protein] + N(6)-[(R)-dihydrolipoyl]-L-lysyl-[protein] + 4 Fe(3+) + 2 hydrogen sulfide + 2 5'-deoxyadenosine + 2 L-methionine + 2 reduced [2Fe-2S]-[ferredoxin]. It participates in protein modification; protein lipoylation via endogenous pathway; protein N(6)-(lipoyl)lysine from octanoyl-[acyl-carrier-protein]: step 2/2. Catalyzes the radical-mediated insertion of two sulfur atoms into the C-6 and C-8 positions of the octanoyl moiety bound to the lipoyl domains of lipoate-dependent enzymes, thereby converting the octanoylated domains into lipoylated derivatives. This Histophilus somni (strain 129Pt) (Haemophilus somnus) protein is Lipoyl synthase.